Here is a 368-residue protein sequence, read N- to C-terminus: MITVDVDLGDRAYPIHIGSGLLSKAELFAPHIRGARAVIVTNETVAPLYAAKVEEAIRSLGKAVDTVVLPDGESFKKWDTLNRIFDALLTAGADRKTTLIALGGGVIGDMTGFAAACYMRGVPFIQVPTTLLSQVDSSVGGKTGINHPLGKNMIGAFHQPQAVLADIDTLRTLPARELAAGMAEVIKHGAIADADYFAWIEQNIRGLNDCDTDLMTEAVRGSVRIKAAVVAQDERETGLRATLNFGHTFGHAIEAGLGYGEWLHGEAVGCGMVMAADLSHRLGFIDIDTRNRITALTCAADLPTVAPALGVDRFIELMRVDKKAEAGEIKFVLLRKLGQAFVTTVPDADLRATLLHAVLRPPTEAPVA.

NAD(+) is bound by residues 71–76, 105–109, 129–130, K142, K151, and 169–172; these read DGESFK, GVIGD, TT, and TLRT. The Zn(2+) site is built by E184, H247, and H264.

This sequence belongs to the sugar phosphate cyclases superfamily. Dehydroquinate synthase family. Requires Co(2+) as cofactor. Zn(2+) is required as a cofactor. It depends on NAD(+) as a cofactor.

It localises to the cytoplasm. The catalysed reaction is 7-phospho-2-dehydro-3-deoxy-D-arabino-heptonate = 3-dehydroquinate + phosphate. It functions in the pathway metabolic intermediate biosynthesis; chorismate biosynthesis; chorismate from D-erythrose 4-phosphate and phosphoenolpyruvate: step 2/7. Its function is as follows. Catalyzes the conversion of 3-deoxy-D-arabino-heptulosonate 7-phosphate (DAHP) to dehydroquinate (DHQ). In Ralstonia pickettii (strain 12J), this protein is 3-dehydroquinate synthase.